The chain runs to 222 residues: PKHD-type hydroxylase Syncc9902_2001 (222 aa).

One can recognise a Fe2OG dioxygenase domain in the interval R80–S174. Residues H98, D100, and H155 each contribute to the Fe cation site. R165 is a 2-oxoglutarate binding site.

Fe(2+) is required as a cofactor. It depends on L-ascorbate as a cofactor.

This chain is PKHD-type hydroxylase Syncc9902_2001, found in Synechococcus sp. (strain CC9902).